A 660-amino-acid polypeptide reads, in one-letter code: RalBP1-associated Eps domain-containing protein 2 (660 aa).

In terms of domain architecture, EH 1 spans 34-147 (EQQCYSELFA…RFMMSKNDGE (114 aa)). The interval 169–208 (EKNSFKRMDDEDKQQETQSPTMSPLASPPSSPPHYQRVPL) is disordered. Serine 254 bears the Phosphoserine mark. The EH 2 domain maps to 282 to 373 (QREYYVNQFR…LQPEYLQAAF (92 aa)). An EF-hand domain is found at 315–350 (LSIPELSYIWELSDADCDGALTLPEFCAAFHLIVAR). Ca(2+) is bound by residues aspartate 328, aspartate 330, aspartate 332, and glutamate 339. Residues 433-616 (NEALPKDVSE…KQKKAIQTAI (184 aa)) are disordered. Threonine 479 carries the post-translational modification Phosphothreonine. The residue at position 493 (serine 493) is a Phosphoserine. Residues 512-523 (LPPPPALPPRPC) show a composition bias toward pro residues. An interaction with RALBP1 region spans residues 514-660 (PPPALPPRPC…LEQLRPVTVL (147 aa)). The interaction with ASAP1 stretch occupies residues 561–660 (PPSKPIRRKF…LEQLRPVTVL (100 aa)). A compositionally biased stretch (low complexity) spans 582–594 (PSTAASGPASAAT). The stretch at 601-657 (VQKQSSKQKKAIQTAIRKNKEANAVLARLNSELQQQLKEVHQERIALENQLEQLRPV) forms a coiled coil.

Interacts with EPN1; the interaction is direct. Interacts with EPS15; the interaction is direct. Interacts with EPS15L1. Interacts with RALBP1; can form a ternary complex with activated Ral (RALA or RALB). Interacts with ASAP1; the interaction is direct and this complex can bind paxillin. Also forms a ternary complex with RALBP1 and ASAP1. Interacts with GRB2. In terms of processing, tyrosine-phosphorylated upon stimulation of cells with EGF. Phosphorylation on Tyr-residues induces its association with the EGF receptor probably indirectly through an adapter like GRB2. As to expression, expressed at high levels in the cerebrum, cerebellum, lung, kidney, and testis. Weakly expressed in the kidney. Isoform 2 is down-regulated during progression of prostate cancer.

It is found in the cytoplasm. In terms of biological role, involved in ligand-dependent receptor mediated endocytosis of the EGF and insulin receptors as part of the Ral signaling pathway. By controlling growth factor receptors endocytosis may regulate cell survival. Through ASAP1 may regulate cell adhesion and migration. In Homo sapiens (Human), this protein is RalBP1-associated Eps domain-containing protein 2 (REPS2).